The primary structure comprises 119 residues: Large ribosomal subunit protein bL20 (119 aa).

This sequence belongs to the bacterial ribosomal protein bL20 family.

Functionally, binds directly to 23S ribosomal RNA and is necessary for the in vitro assembly process of the 50S ribosomal subunit. It is not involved in the protein synthesizing functions of that subunit. This chain is Large ribosomal subunit protein bL20, found in Listeria innocua serovar 6a (strain ATCC BAA-680 / CLIP 11262).